A 423-amino-acid chain; its full sequence is MLDPKILRQNLEHVVEKLRRRGFEMDSDTFLQLENKRKEAQLAIQSFQTKRNQLSKTIGMAKSKGENPEPLMAEVSQLNDELKQEEANFETIQKAFSDFQLAIPNLPHDSVPDGKSENDNREIRQWGAPPGFDFTPKDHTVLGERDNQLDFEAAAKLSGARFVVLRGSLARAHRALAQFMLDLHTDQHGYEEVYVPYLVHEECLYGTGQLPKFREEQFQVAGDRNFFLVPTGEVPLVNLARDEIIEAPALPKKWVAQTPCFRSEAGSYGKDVRGMIRQHQFQKVELVQLVQPENSYQALEEITRQAEKVLQLLALPYRVVELCAGDLGFAAAKTYDLEVWLPSQNKYREISSCSNCEDFQARRIQARWRNPKTGKPELLHTLNGSGLAVGRTLVAVMENYQQADGHIRVPDALKSYMGGVDYF.

L-serine is bound at residue 231-233 (TGE). 262-264 (RSE) provides a ligand contact to ATP. Glu285 provides a ligand contact to L-serine. ATP is bound at residue 349-352 (EISS). Ser385 is an L-serine binding site.

Belongs to the class-II aminoacyl-tRNA synthetase family. Type-1 seryl-tRNA synthetase subfamily. Homodimer. The tRNA molecule binds across the dimer.

It is found in the cytoplasm. The enzyme catalyses tRNA(Ser) + L-serine + ATP = L-seryl-tRNA(Ser) + AMP + diphosphate + H(+). It carries out the reaction tRNA(Sec) + L-serine + ATP = L-seryl-tRNA(Sec) + AMP + diphosphate + H(+). The protein operates within aminoacyl-tRNA biosynthesis; selenocysteinyl-tRNA(Sec) biosynthesis; L-seryl-tRNA(Sec) from L-serine and tRNA(Sec): step 1/1. Its function is as follows. Catalyzes the attachment of serine to tRNA(Ser). Is also able to aminoacylate tRNA(Sec) with serine, to form the misacylated tRNA L-seryl-tRNA(Sec), which will be further converted into selenocysteinyl-tRNA(Sec). The protein is Serine--tRNA ligase of Coxiella burnetii (strain CbuG_Q212) (Coxiella burnetii (strain Q212)).